Reading from the N-terminus, the 177-residue chain is Large ribosomal subunit protein uL6 (177 aa).

Residues 151 to 177 (YRPPEPYKGKGIRYSDEHVVRKEAKKK) are disordered. The segment covering 155-177 (EPYKGKGIRYSDEHVVRKEAKKK) has biased composition (basic and acidic residues).

The protein belongs to the universal ribosomal protein uL6 family. In terms of assembly, part of the 50S ribosomal subunit.

Its function is as follows. This protein binds to the 23S rRNA, and is important in its secondary structure. It is located near the subunit interface in the base of the L7/L12 stalk, and near the tRNA binding site of the peptidyltransferase center. This chain is Large ribosomal subunit protein uL6, found in Psychrobacter sp. (strain PRwf-1).